We begin with the raw amino-acid sequence, 360 residues long: tRNA (guanine(9)-N1)-methyltransferase (360 aa).

The tract at residues 1 to 77 is disordered; sequence MENQDTEQSQ…RRKERIKEAE (77 aa). Basic and acidic residues-rich tracts occupy residues 8–24 and 33–55; these read QSQK…DFKR and MTKR…DEYK. Residues 56 to 67 show a composition bias toward basic residues; that stretch reads QKKREKKKAARE. The segment covering 68–77 has biased composition (basic and acidic residues); the sequence is RRKERIKEAE. An SAM-dependent MTase TRM10-type domain is found at 94–293; that stretch reads RAKVAPQEQI…EVLPPRKVKG (200 aa). Residues 199 to 200, Gly-219, 223 to 227, Cys-231, Leu-245, and 257 to 259 contribute to the S-adenosyl-L-methionine site; these read LT, DKNRY, and QVL. Asp-223 (proton acceptor) is an active-site residue. A disordered region spans residues 291-360; it reads VKGKLTHGSD…SDEPSKGADH (70 aa). A compositionally biased stretch (basic and acidic residues) spans 297 to 306; it reads HGSDPEKSIE. Positions 307–324 are enriched in low complexity; the sequence is PSEVSEQPVSSEQSEQPV. Polar residues predominate over residues 328-343; it reads QPVSSEQPVLSEQPVL.

The protein belongs to the class IV-like SAM-binding methyltransferase superfamily. TRM10 family. Monomer.

It is found in the cytoplasm. The protein resides in the nucleus. It catalyses the reaction guanosine(9) in tRNA + S-adenosyl-L-methionine = N(1)-methylguanosine(9) in tRNA + S-adenosyl-L-homocysteine + H(+). S-adenosyl-L-methionine-dependent guanine N(1)-methyltransferase that catalyzes the formation of N(1)-methylguanine at position 9 (m1G9) in cytoplasmic tRNA. This is tRNA (guanine(9)-N1)-methyltransferase from Debaryomyces hansenii (strain ATCC 36239 / CBS 767 / BCRC 21394 / JCM 1990 / NBRC 0083 / IGC 2968) (Yeast).